We begin with the raw amino-acid sequence, 938 residues long: Isoleucine--tRNA ligase (938 aa).

The 'HIGH' region signature appears at 58-68 (PYANGSIHIGH). Residue Lys-183 is modified to N6-acetyllysine. L-isoleucyl-5'-AMP is bound at residue Glu-561. The 'KMSKS' region motif lies at 602–606 (KMSKS). Residue Lys-605 coordinates ATP. Positions 901, 904, 921, and 924 each coordinate Zn(2+).

Belongs to the class-I aminoacyl-tRNA synthetase family. IleS type 1 subfamily. Monomer. The cofactor is Zn(2+).

Its subcellular location is the cytoplasm. The catalysed reaction is tRNA(Ile) + L-isoleucine + ATP = L-isoleucyl-tRNA(Ile) + AMP + diphosphate. Its function is as follows. Catalyzes the attachment of isoleucine to tRNA(Ile). As IleRS can inadvertently accommodate and process structurally similar amino acids such as valine, to avoid such errors it has two additional distinct tRNA(Ile)-dependent editing activities. One activity is designated as 'pretransfer' editing and involves the hydrolysis of activated Val-AMP. The other activity is designated 'posttransfer' editing and involves deacylation of mischarged Val-tRNA(Ile). This is Isoleucine--tRNA ligase from Escherichia coli O7:K1 (strain IAI39 / ExPEC).